The primary structure comprises 366 residues: Ferrochelatase (366 aa).

Fe cation contacts are provided by histidine 210 and glutamate 293.

The protein belongs to the ferrochelatase family.

The protein resides in the cytoplasm. It carries out the reaction heme b + 2 H(+) = protoporphyrin IX + Fe(2+). It participates in porphyrin-containing compound metabolism; protoheme biosynthesis; protoheme from protoporphyrin-IX: step 1/1. Catalyzes the ferrous insertion into protoporphyrin IX. The protein is Ferrochelatase of Leptospira borgpetersenii serovar Hardjo-bovis (strain L550).